The primary structure comprises 404 residues: MKLPIYLDYSATTPVDPRVAEKMMQFLTLDGTFGNPASRSHRFGWQAEEAVDIARNQIAELVGADPREIVFTSGATESDNLAIKGAANFYQKKGKHIITSKTEHKAVLDTCRQLEREGFEVTYLAPQSNGIISLQALEAAMREDTILVSIMHVNNEIGVVQDIEAIGEMCRARGIIYHVDATQSVGKLPIDLSKLKVDLMSFSGHKIYGPKGIGALYVRRKPRIRIEAQIHGGGHERGMRSGTLPVHQIAGMGEAYRIAKEEMASEMARLRTLRDRLWNGVKDMEEVYLNGSLENGVPNILNVSFNYVEGESLIMALKDLAVSSGSACTSASLEPSYVLRALGMTDELAHSSIRFSLGRFTTEEEIDYTIQLVRKSIGRLRDLSPLWDMFKQGVDINSIEWAHH.

Pyridoxal 5'-phosphate-binding positions include 75 to 76 (AT), Asn-155, Gln-183, and 203 to 205 (SGH). N6-(pyridoxal phosphate)lysine is present on Lys-206. Pyridoxal 5'-phosphate is bound at residue Thr-243. Cys-328 functions as the Cysteine persulfide intermediate in the catalytic mechanism. Residue Cys-328 coordinates [2Fe-2S] cluster.

It belongs to the class-V pyridoxal-phosphate-dependent aminotransferase family. NifS/IscS subfamily. Homodimer. Forms a heterotetramer with IscU, interacts with other sulfur acceptors. Requires pyridoxal 5'-phosphate as cofactor.

Its subcellular location is the cytoplasm. The enzyme catalyses (sulfur carrier)-H + L-cysteine = (sulfur carrier)-SH + L-alanine. Its pathway is cofactor biosynthesis; iron-sulfur cluster biosynthesis. Functionally, master enzyme that delivers sulfur to a number of partners involved in Fe-S cluster assembly, tRNA modification or cofactor biosynthesis. Catalyzes the removal of elemental sulfur atoms from cysteine to produce alanine. Functions as a sulfur delivery protein for Fe-S cluster synthesis onto IscU, an Fe-S scaffold assembly protein, as well as other S acceptor proteins. This chain is Cysteine desulfurase IscS, found in Serratia proteamaculans (strain 568).